The sequence spans 227 residues: MLLPPALYSRLAGEPGAAEPLPVERNPAAGEAPFRFAPRAVRFPRDHEFFEDGDVQRHLYLQDMLTQVSETPEKSMVPEFTCQVAGCCQVFAAIEDYQHHYHMMHGNTCSFCNRAFPSGHLLDVHILEWHDSLFQILAQRQDMYQCLVESCPEKFKTSQDRKDHMVRLHLYPADFRFDKPKTNRGPAMPAAADAATRAPTDDSDAMEICSEPAAPPPCRRTYSHRSV.

3 consecutive C2H2-type zinc fingers follow at residues 80 to 105 (FTCQVAGCCQVFAAIEDYQHHYHMMH), 107 to 130 (NTCSFCNRAFPSGHLLDVHILEWH), and 144 to 169 (YQCLVESCPEKFKTSQDRKDHMVRLH). The tract at residues 180–204 (PKTNRGPAMPAAADAATRAPTDDSD) is disordered. The segment covering 186-198 (PAMPAAADAATRA) has biased composition (low complexity).

Belongs to the krueppel C2H2-type zinc-finger protein family.

The protein localises to the nucleus. Its function is as follows. May be involved in transcriptional regulation. The polypeptide is Zinc finger protein 511 (Znf511) (Mus musculus (Mouse)).